The sequence spans 575 residues: NEDD4-binding protein 2-like 2 (575 aa).

3 stretches are compositionally biased toward basic and acidic residues: residues 69–87 (QEDKTSTDVLKPLHKEMPG), 129–142 (PPEKKKCRERKSET), and 149–167 (DSKRRQEEKQKSNSKKLEM). Disordered regions lie at residues 69-169 (QEDK…EMDT) and 555-575 (GEQRWGGSLGSHSQVSIADDY). Residues 162-194 (SKKLEMDTELSQFYKEIEELENENEASQGSCTE) adopt a coiled-coil conformation. The segment covering 564–575 (GSHSQVSIADDY) has biased composition (polar residues).

The chain is NEDD4-binding protein 2-like 2 (N4bp2l2) from Mus musculus (Mouse).